We begin with the raw amino-acid sequence, 97 residues long: Unclassified hydrophobin F (97 aa).

A signal peptide spans methionine 1–alanine 17. Disulfide bonds link cysteine 24/cysteine 75, cysteine 39/cysteine 67, cysteine 40/cysteine 58, and cysteine 76/cysteine 85.

The protein resides in the secreted. Its subcellular location is the cell wall. In terms of biological role, aerial growth, conidiation, and dispersal of filamentous fungi in the environment rely upon a capability of their secreting small amphipathic proteins called hydrophobins (HPBs) with low sequence identity. Class I can self-assemble into an outermost layer of rodlet bundles on aerial cell surfaces, conferring cellular hydrophobicity that supports fungal growth, development and dispersal; whereas Class II form highly ordered films at water-air interfaces through intermolecular interactions but contribute nothing to the rodlet structure. In P.expansum, hydrophobins contribute to germination, tolerance to cold stress and mycotoxins patulin and citrinin production. HfbC, HfbD, HfbE, and HfbF have functional redundancy in fungal surface hydrophobicity. The chain is Unclassified hydrophobin F from Penicillium expansum (Blue mold rot fungus).